A 491-amino-acid polypeptide reads, in one-letter code: Carboxypeptidase SOL1 (491 aa).

The signal sequence occupies residues 1-25; that stretch reads MSKLRFFQSLLISTVICFFLPSINA. Topologically, residues 26–452 are extracellular; sequence RGGHSDHIHP…LLTQFFTETN (427 aa). Asn39 carries N-linked (GlcNAc...) asparagine glycosylation. The 275-residue stretch at 64 to 338 folds into the Peptidase M14 domain; it reads GYMTNDDLEK…KSMLNLVASL (275 aa). Residues His125 and Glu128 each contribute to the Zn(2+) site. Substrate is bound by residues 125 to 128 and 186 to 187; these read HGDE and NR. His226 is a Zn(2+) binding site. N-linked (GlcNAc...) asparagine glycosylation occurs at Asn268. Substrate is bound at residue Tyr286. Glu308 (proton donor/acceptor) is an active-site residue. The chain crosses the membrane as a helical span at residues 453–470; sequence NGITLTLFVVVVFLCFLL. Topologically, residues 471–491 are cytoplasmic; sequence QRRVRFNLWKQRQSSRRSITV.

Belongs to the peptidase M14 family. Zn(2+) serves as cofactor. Expressed in roots, shoots, leaves, flowers and siliques.

Its subcellular location is the endosome membrane. Its function is as follows. Possesses in vitro carboxypeptidase activity against the C-terminal arginine and lysine residues. Involved in the maturation of CLE19. Removes the C-terminal arginine residue of CLE19 proprotein. The cleavage of the C-terminal arginine residue is necessary for CLE19 activity in vivo. Is not involved in generating active CLV3. Is not involved in CLE19 or CLV3 perception. In Arabidopsis thaliana (Mouse-ear cress), this protein is Carboxypeptidase SOL1.